Here is a 358-residue protein sequence, read N- to C-terminus: Acid phosphatase (358 aa).

An N-terminal signal peptide occupies residues 1-17 (MKFSTIALPLLASAALA). N-linked (GlcNAc...) asparagine glycosylation is found at N20, N27, and N32. Residues 21–41 (SSHSGTNATSHNSTVPNENSK) form a disordered region. Residues D49, D50, and S81 each coordinate Mg(2+). 2 N-linked (GlcNAc...) asparagine glycosylation sites follow: N92 and N145. N156 contacts Mg(2+). S189 is an active-site residue. N199 and N278 each carry an N-linked (GlcNAc...) asparagine glycan.

The protein belongs to the SurE nucleotidase family. Mg(2+) serves as cofactor.

It is found in the secreted. The catalysed reaction is a phosphate monoester + H2O = an alcohol + phosphate. Functionally, probably serves to scavenge phosphorus for growing cells. This Yarrowia lipolytica (strain CLIB 122 / E 150) (Yeast) protein is Acid phosphatase (PHO2).